The primary structure comprises 881 residues: Putative SWI/SNF-related matrix-associated actin-dependent regulator of chromatin subfamily A member 3-like 1 (881 aa).

The region spanning 272-486 (DKRPDPLRGG…YSLMAFLRFE (215 aa)) is the Helicase ATP-binding domain. 285–292 (DDMGLGKT) is an ATP binding site. The interval 308–343 (STSTPTEEPLDGEGDKIEKKGKKRGRGKSSESVTRK) is disordered. Residues 437 to 440 (DEAH) carry the DEAH box motif. An RING-type zinc finger spans residues 635–674 (CPICISPPTNIIITRCAHIFCRACILQTLQRSKPLCPLCR). The tract at residues 681–703 (DLYNAPPPPPDSSNTDGEDAKSS) is disordered. Residues 711–876 (ALLSLLMASR…EREVNVEDVV (166 aa)) form the Helicase C-terminal domain.

It belongs to the SNF2/RAD54 helicase family. RAD16 subfamily.

The protein localises to the nucleus. Its function is as follows. Possesses intrinsic ATP-dependent nucleosome-remodeling activity. This activity may be required for transcriptional activation or repression of specific target promoters. This is Putative SWI/SNF-related matrix-associated actin-dependent regulator of chromatin subfamily A member 3-like 1 from Arabidopsis thaliana (Mouse-ear cress).